The chain runs to 272 residues: uncharacterized protein (272 aa).

This is an uncharacterized protein from Bacillus anthracis.